The chain runs to 917 residues: Protein translocase subunit SecA (917 aa).

ATP contacts are provided by residues glutamine 87, 105 to 109 (GEGKT), and aspartate 516. Residues cysteine 901, cysteine 903, cysteine 912, and histidine 913 each contribute to the Zn(2+) site.

The protein belongs to the SecA family. Monomer and homodimer. Part of the essential Sec protein translocation apparatus which comprises SecA, SecYEG and auxiliary proteins SecDF-YajC and YidC. Zn(2+) serves as cofactor.

Its subcellular location is the cell inner membrane. The protein localises to the cytoplasm. The enzyme catalyses ATP + H2O + cellular proteinSide 1 = ADP + phosphate + cellular proteinSide 2.. Functionally, part of the Sec protein translocase complex. Interacts with the SecYEG preprotein conducting channel. Has a central role in coupling the hydrolysis of ATP to the transfer of proteins into and across the cell membrane, serving both as a receptor for the preprotein-SecB complex and as an ATP-driven molecular motor driving the stepwise translocation of polypeptide chains across the membrane. This Verminephrobacter eiseniae (strain EF01-2) protein is Protein translocase subunit SecA.